The following is a 180-amino-acid chain: NAD(P)H-quinone oxidoreductase subunit I, chloroplastic (180 aa).

4Fe-4S ferredoxin-type domains lie at 55-84 and 95-124; these read GRIH…VDWR and LNYS…MTEE. Residues Cys64, Cys67, Cys70, Cys74, Cys104, Cys107, Cys110, and Cys114 each contribute to the [4Fe-4S] cluster site.

The protein belongs to the complex I 23 kDa subunit family. As to quaternary structure, NDH is composed of at least 16 different subunits, 5 of which are encoded in the nucleus. It depends on [4Fe-4S] cluster as a cofactor.

The protein resides in the plastid. It is found in the chloroplast thylakoid membrane. It carries out the reaction a plastoquinone + NADH + (n+1) H(+)(in) = a plastoquinol + NAD(+) + n H(+)(out). The catalysed reaction is a plastoquinone + NADPH + (n+1) H(+)(in) = a plastoquinol + NADP(+) + n H(+)(out). Its function is as follows. NDH shuttles electrons from NAD(P)H:plastoquinone, via FMN and iron-sulfur (Fe-S) centers, to quinones in the photosynthetic chain and possibly in a chloroplast respiratory chain. The immediate electron acceptor for the enzyme in this species is believed to be plastoquinone. Couples the redox reaction to proton translocation, and thus conserves the redox energy in a proton gradient. This is NAD(P)H-quinone oxidoreductase subunit I, chloroplastic from Chloranthus spicatus (Chulantree).